Consider the following 291-residue polypeptide: DNA repair protein RecO (291 aa).

The protein belongs to the RecO family.

In terms of biological role, involved in DNA repair and RecF pathway recombination. The sequence is that of DNA repair protein RecO from Cupriavidus pinatubonensis (strain JMP 134 / LMG 1197) (Cupriavidus necator (strain JMP 134)).